Consider the following 29-residue polypeptide: Glucagon (29 aa).

It belongs to the glucagon family.

The protein resides in the secreted. In terms of biological role, glucagon plays a key role in glucose metabolism and homeostasis. Regulates blood glucose by increasing gluconeogenesis and decreasing glycolysis. The sequence is that of Glucagon (GCG) from Meleagris gallopavo (Wild turkey).